The following is a 369-amino-acid chain: Melanoma-associated antigen 10 (369 aa).

Residues 1–131 are disordered; the sequence is MPRAPKRQRC…VLPDSESLPR (131 aa). The span at 39 to 62 shows a compositional bias: low complexity; sequence SSSTSTSSSFPSSFPSSSSSSSSS. 2 stretches are compositionally biased toward polar residues: residues 85 to 96 and 107 to 121; these read QSAQIACSSPSV and EGSSSQKEESPSTLQ. The region spanning 134–333 is the MAGE domain; it reads IDEKVTDLVQ…RSFPLWYEEA (200 aa). The tract at residues 340–369 is disordered; it reads RAQDRIATTDDTTAMASASSSATGSFSYPE. The span at 348 to 369 shows a compositional bias: low complexity; that stretch reads TDDTTAMASASSSATGSFSYPE.

As to expression, expressed in many tumors of several types, such as melanoma, head and neck squamous cell carcinoma, lung carcinoma and breast carcinoma, but not in normal tissues except for spermatogonia, spermatocytes and placenta.

The protein resides in the nucleus. In terms of biological role, not known, though may play a role in embryonal development and tumor transformation or aspects of tumor progression. In Homo sapiens (Human), this protein is Melanoma-associated antigen 10 (MAGEA10).